A 209-amino-acid chain; its full sequence is NAD(P)H dehydrogenase (quinone) (209 aa).

The region spanning 4–199 (VNIIFYSMYG…AMARYQGRHV (196 aa)) is the Flavodoxin-like domain. Residues 10–15 (SMYGHV) and 87–89 (TRY) contribute to the FMN site. Y12 serves as a coordination point for NAD(+). Position 107 (W107) interacts with substrate. FMN-binding positions include 122-128 (SSGTQHG) and H143.

Belongs to the WrbA family. The cofactor is FMN.

The enzyme catalyses a quinone + NADH + H(+) = a quinol + NAD(+). The catalysed reaction is a quinone + NADPH + H(+) = a quinol + NADP(+). This is NAD(P)H dehydrogenase (quinone) from Methanosarcina acetivorans (strain ATCC 35395 / DSM 2834 / JCM 12185 / C2A).